Consider the following 78-residue polypeptide: Large ribosomal subunit protein bL28 (78 aa).

The protein belongs to the bacterial ribosomal protein bL28 family.

This Shigella boydii serotype 4 (strain Sb227) protein is Large ribosomal subunit protein bL28.